The chain runs to 2623 residues: Immunoglobulin superfamily member 10 (2623 aa).

The first 28 residues, 1–28 (MKVKGRGITCLLVSFAVICLVATPGGKA), serve as a signal peptide directing secretion. The 28-residue stretch at 29 to 56 (CPRRCACYMPTEVHCTFRYLTSIPDSIP) folds into the LRRNT domain. 6 LRR repeats span residues 58–79 (NVER…DFSG), 82–103 (KLEL…TFSD), 106–127 (ALQV…TFYG), 130–151 (SLTR…VFYG), 154–175 (FLRL…TFVS), and 186–207 (FIKF…MVSY). The LRRCT domain maps to 219-281 (NPWTCDCHLK…VSAAAFQCAK (63 aa)). Asparagine 319 and asparagine 439 each carry an N-linked (GlcNAc...) asparagine glycan. 2 consecutive Ig-like C2-type domains span residues 461 to 567 (PRAE…YRIT) and 571 to 661 (PLVE…FQVS). 2 cysteine pairs are disulfide-bonded: cysteine 497–cysteine 551 and cysteine 595–cysteine 645. The N-linked (GlcNAc...) asparagine glycan is linked to asparagine 627. Disordered regions lie at residues 668-692 (RPLE…HLKE) and 767-788 (AMPD…QLPN). 2 N-linked (GlcNAc...) asparagine glycosylation sites follow: asparagine 774 and asparagine 999. 2 disordered regions span residues 1334–1376 (TQTE…AMTP) and 1434–1453 (STIA…TTTR). Over residues 1335 to 1356 (QTERSRAQTIQREQEPQKKNRT) the composition is skewed to basic and acidic residues. Residues 1357-1373 (DPNISPDQSSGFTTPTA) show a composition bias toward polar residues. 10 consecutive Ig-like C2-type domains span residues 1648–1739 (PRIV…VTLS), 1745–1836 (PRIL…VKIQ), 1841–1933 (PPVI…VMLT), 1941–2034 (PRIE…VSLR), 2037–2135 (PAKI…VHLT), 2141–2229 (PRIR…YKLD), 2234–2331 (PPLI…LEVL), 2337–2427 (PTFR…VILE), 2432–2518 (PVIL…TLIT), and 2528–2623 (PRIT…IQVI). 3 disulfides stabilise this stretch: cysteine 1670–cysteine 1723, cysteine 1767–cysteine 1820, and cysteine 1864–cysteine 1917. N-linked (GlcNAc...) asparagine glycans are attached at residues asparagine 1899 and asparagine 1962. 7 disulfide bridges follow: cysteine 1963–cysteine 2016, cysteine 2060–cysteine 2119, cysteine 2163–cysteine 2213, cysteine 2261–cysteine 2313, cysteine 2359–cysteine 2411, cysteine 2454–cysteine 2506, and cysteine 2550–cysteine 2605. The N-linked (GlcNAc...) asparagine glycan is linked to asparagine 2101. Residue tyrosine 2603 is modified to Phosphotyrosine.

It is found in the secreted. Involved in the control of early migration of neurons expressing gonadotropin-releasing hormone (GNRH neurons). May be involved in the maintenance of osteochondroprogenitor cells pool. This Homo sapiens (Human) protein is Immunoglobulin superfamily member 10 (IGSF10).